A 160-amino-acid chain; its full sequence is Cytochrome b6-f complex subunit 4 (160 aa).

The next 3 helical transmembrane spans lie at leucine 36–valine 56, leucine 95–glutamate 115, and isoleucine 128–cysteine 148.

Belongs to the cytochrome b family. PetD subfamily. The 4 large subunits of the cytochrome b6-f complex are cytochrome b6, subunit IV (17 kDa polypeptide, PetD), cytochrome f and the Rieske protein, while the 4 small subunits are PetG, PetL, PetM and PetN. The complex functions as a dimer.

It localises to the cellular thylakoid membrane. In terms of biological role, component of the cytochrome b6-f complex, which mediates electron transfer between photosystem II (PSII) and photosystem I (PSI), cyclic electron flow around PSI, and state transitions. In Prochlorococcus marinus (strain MIT 9303), this protein is Cytochrome b6-f complex subunit 4.